Reading from the N-terminus, the 262-residue chain is MDINASRALANVYDLPDDFFPKIDDLVRDAKDALEPYWKSDSIKKHVLIATHFVDLIEDFWQTTQGMHEIAESLRAVIPPTTAPVPTGYLIQHEEAEEIPLGDLFKHQEERIVSFQPDYPITARIHAHLKAYAKINEESLDRARRLLWWHYNCLLWGEANVTNYISRLRTWLSTPEKYRGRDAPTIEAITRPIQAAQGGRKTSSGTRKPRGLEPRRRKVKTTVVYGRRRSKSRERRAPSPQRAGSPLPRSSSSHHRSPSPRK.

The disordered stretch occupies residues 183–262 (APTIEAITRP…SHHRSPSPRK (80 aa)). The Bipartite nuclear localization signal signature appears at 215 to 233 (RRRKVKTTVVYGRRRSKSR). Basic residues-rich tracts occupy residues 215–234 (RRRK…KSRE) and 252–262 (SSHHRSPSPRK).

The protein belongs to the avihepadnavirus core antigen family. Homodimerizes, then multimerizes.

It localises to the virion. The protein resides in the host cytoplasm. Functionally, self assembles to form an icosahedral capsid. Most capsid appear to be large particles with an icosahedral symmetry of T=4 and consist of 240 copies of capsid protein, though a fraction forms smaller T=3 particles consisting of 180 capsid proteins. Entering capsid are transported along microtubules to the nucleus. Phosphorylation of the capsid is thought to induce exposure of nuclear localization signal in the C-terminal portion of the capsid protein that allows binding to the nuclear pore complex via the importin (karyopherin-) alpha and beta. Capsids are imported in intact form through the nuclear pore into the nuclear basket, where it probably binds NUP153. Only capsids that contain the mature viral genome can release the viral DNA and capsid protein into the nucleoplasm. Immature capsids get stucked in the basket. Capsids encapsulate the pre-genomic RNA and the P protein. Pre-genomic RNA is reverse transcribed into DNA while the capsid is still in the cytoplasm. The capsid can then either be directed to the nucleus, providing more genome for transcription, or bud through the endoplasmic reticulum to provide new virions. The sequence is that of Capsid protein (C) from Duck hepatitis B virus (isolate Shanghai/DHBVQCA34) (DHBV).